We begin with the raw amino-acid sequence, 615 residues long: Cysteine-rich receptor-like protein kinase 1 (615 aa).

A signal peptide spans 1 to 28; sequence MQICASIAQFLAWVSFLVLLATVGSSSS. 2 consecutive Gnk2-homologous domains span residues 29 to 131 and 137 to 237; these read SESL…DRDF and DPTF…THKF. The Extracellular segment spans residues 29-266; the sequence is SESLLNCQPL…SFFPHLSDRD (238 aa). 2 N-linked (GlcNAc...) asparagine glycosylation sites follow: Asn-100 and Asn-165. A helical transmembrane segment spans residues 267-287; sequence VTRLAIAAISLSILTSLGAFI. The Cytoplasmic segment spans residues 288 to 615; sequence SYRRVSRKRK…VLMPDEETRV (328 aa). Residues 318–602 enclose the Protein kinase domain; sequence FHDSMKLGQG…FEYPKQPPFL (285 aa). Residues 324 to 332 and Lys-346 each bind ATP; that span reads LGQGGAGSV. Catalysis depends on Asp-443, which acts as the Proton acceptor.

It belongs to the protein kinase superfamily. Ser/Thr protein kinase family. CRK subfamily. Expressed in the whole plant at low levels.

Its subcellular location is the membrane. The catalysed reaction is L-seryl-[protein] + ATP = O-phospho-L-seryl-[protein] + ADP + H(+). The enzyme catalyses L-threonyl-[protein] + ATP = O-phospho-L-threonyl-[protein] + ADP + H(+). In Arabidopsis thaliana (Mouse-ear cress), this protein is Cysteine-rich receptor-like protein kinase 1.